The following is a 389-amino-acid chain: Large envelope protein (389 aa).

2 stretches are compositionally biased toward polar residues: residues 1 to 10 and 85 to 95; these read MGQNLSTSNP and STNRQTGRQPT. 2 disordered regions span residues 1–54 and 73–106; these read MGQN…AFGL and ILHTVPANPPPASTNRQTGRQPTPLSPPLRDTHP. A lipid anchor (N-myristoyl glycine; by host) is attached at glycine 2. A pre-S1 region spans residues 2-108; sequence GQNLSTSNPL…PPLRDTHPQA (107 aa). Positions 2–163 are pre-S; sequence GQNLSTSNPL…FSRIGDPVTN (162 aa). Residues 2 to 170 are Virion surface; in external conformation-facing; it reads GQNLSTSNPL…VTNMENITSG (169 aa). The Intravirion; in internal conformation portion of the chain corresponds to 2 to 242; the sequence is GQNLSTSNPL…PGYRWMCLRG (241 aa). A pre-S2 region spans residues 109-163; it reads VQWNSTTFHQTLQDPRVRGLYFPAGGSSSGTVNPVPTTASPLSSIFSRIGDPVTN. The chain crosses the membrane as a helical span at residues 171 to 191; it reads FLGPLLVLQAGFFLLTRILTI. The Intravirion; in external conformation portion of the chain corresponds to 192 to 242; it reads PQSLDSWWTSLNFRGGTTVCLGQNSQSPTSNHSPTSCPPTCPGYRWMCLRG. A helical membrane pass occupies residues 243 to 263; the sequence is FIIFLFILLLCLIFLLVLLEY. Topologically, residues 264–337 are virion surface; sequence QGMLHVCPLI…WASVRFSWLS (74 aa). N-linked (GlcNAc...) asparagine; by host glycosylation occurs at asparagine 309. Residues 338-358 form a helical membrane-spanning segment; it reads LLVPFVQWFVGLSPTVWLSAI. The Intravirion portion of the chain corresponds to 359–364; the sequence is WMMWYW. Residues 365-387 traverse the membrane as a helical segment; that stretch reads GPSLYSILSPFLPLLPIFFCLWV. At 388–389 the chain is on the virion surface side; that stretch reads YI.

This sequence belongs to the orthohepadnavirus major surface antigen family. Li-HBsAg interacts with capsid protein and with HDV Large delta antigen. Isoform M associates with host chaperone CANX through its pre-S2 N glycan. This association may be essential for M proper secretion. Post-translationally, isoform M is N-terminally acetylated by host at a ratio of 90%, and N-glycosylated by host at the pre-S2 region. Myristoylated.

The protein localises to the virion membrane. The large envelope protein exists in two topological conformations, one which is termed 'external' or Le-HBsAg and the other 'internal' or Li-HBsAg. In its external conformation the protein attaches the virus to cell receptors and thereby initiating infection. This interaction determines the species specificity and liver tropism. This attachment induces virion internalization predominantly through caveolin-mediated endocytosis. The large envelope protein also assures fusion between virion membrane and endosomal membrane. In its internal conformation the protein plays a role in virion morphogenesis and mediates the contact with the nucleocapsid like a matrix protein. Functionally, the middle envelope protein plays an important role in the budding of the virion. It is involved in the induction of budding in a nucleocapsid independent way. In this process the majority of envelope proteins bud to form subviral lipoprotein particles of 22 nm of diameter that do not contain a nucleocapsid. The protein is Large envelope protein of Homo sapiens (Human).